Reading from the N-terminus, the 418-residue chain is Serine hydroxymethyltransferase (418 aa).

(6S)-5,6,7,8-tetrahydrofolate-binding positions include leucine 121 and 125–127; that span reads GHL. N6-(pyridoxal phosphate)lysine is present on lysine 230. Residue 356–358 coordinates (6S)-5,6,7,8-tetrahydrofolate; it reads SPF.

Belongs to the SHMT family. As to quaternary structure, homodimer. Pyridoxal 5'-phosphate is required as a cofactor.

Its subcellular location is the cytoplasm. The enzyme catalyses (6R)-5,10-methylene-5,6,7,8-tetrahydrofolate + glycine + H2O = (6S)-5,6,7,8-tetrahydrofolate + L-serine. It participates in one-carbon metabolism; tetrahydrofolate interconversion. Its pathway is amino-acid biosynthesis; glycine biosynthesis; glycine from L-serine: step 1/1. Functionally, catalyzes the reversible interconversion of serine and glycine with tetrahydrofolate (THF) serving as the one-carbon carrier. This reaction serves as the major source of one-carbon groups required for the biosynthesis of purines, thymidylate, methionine, and other important biomolecules. Also exhibits THF-independent aldolase activity toward beta-hydroxyamino acids, producing glycine and aldehydes, via a retro-aldol mechanism. The protein is Serine hydroxymethyltransferase of Pseudoalteromonas atlantica (strain T6c / ATCC BAA-1087).